We begin with the raw amino-acid sequence, 322 residues long: MSQRITIDHRSAPALRHPEKAHRPDNPIQRKPSWIRVKAPNHPVYHETRALMRDAGLVTVCEEAACPNIGECWSQRHATMMIMGEICTRACAFCNVTTGLPKHLDEDEPRRVGEAVAKLGLKHVVITSVDRDDLEDGGAMHFARVIHAIRETSPQTTIEILTPDFLRKDGALEVVVAARPDVFNHNIETIPRLYPTIRPGARYYQSVRLLDGVKKLDPSIFTKSGLMLGLGEERMEVAQVMDDFRIADVDFLTLGQYLQPSAKHAAVEKFVTPDEFDGYAAAARSKGFLQVSASPLTRSSYHADSDFAKLQAARNSRLKESL.

Residues 1–25 (MSQRITIDHRSAPALRHPEKAHRPD) show a composition bias toward basic and acidic residues. Residues 1-29 (MSQRITIDHRSAPALRHPEKAHRPDNPIQ) are disordered. [4Fe-4S] cluster contacts are provided by C61, C66, C72, C87, C91, C94, and S300. Positions 73-289 (WSQRHATMMI…AAAARSKGFL (217 aa)) constitute a Radical SAM core domain.

Belongs to the radical SAM superfamily. Lipoyl synthase family. It depends on [4Fe-4S] cluster as a cofactor.

The protein localises to the cytoplasm. It catalyses the reaction [[Fe-S] cluster scaffold protein carrying a second [4Fe-4S](2+) cluster] + N(6)-octanoyl-L-lysyl-[protein] + 2 oxidized [2Fe-2S]-[ferredoxin] + 2 S-adenosyl-L-methionine + 4 H(+) = [[Fe-S] cluster scaffold protein] + N(6)-[(R)-dihydrolipoyl]-L-lysyl-[protein] + 4 Fe(3+) + 2 hydrogen sulfide + 2 5'-deoxyadenosine + 2 L-methionine + 2 reduced [2Fe-2S]-[ferredoxin]. Its pathway is protein modification; protein lipoylation via endogenous pathway; protein N(6)-(lipoyl)lysine from octanoyl-[acyl-carrier-protein]: step 2/2. Catalyzes the radical-mediated insertion of two sulfur atoms into the C-6 and C-8 positions of the octanoyl moiety bound to the lipoyl domains of lipoate-dependent enzymes, thereby converting the octanoylated domains into lipoylated derivatives. The protein is Lipoyl synthase of Gluconobacter oxydans (strain 621H) (Gluconobacter suboxydans).